The sequence spans 199 residues: Ribosome maturation factor RimM (199 aa).

One can recognise a PRC barrel domain in the interval 100-195 (ADEWYPKDLI…YLTLDPPGGL (96 aa)).

It belongs to the RimM family. Binds ribosomal protein uS19.

It is found in the cytoplasm. In terms of biological role, an accessory protein needed during the final step in the assembly of 30S ribosomal subunit, possibly for assembly of the head region. Essential for efficient processing of 16S rRNA. May be needed both before and after RbfA during the maturation of 16S rRNA. It has affinity for free ribosomal 30S subunits but not for 70S ribosomes. The protein is Ribosome maturation factor RimM of Bifidobacterium longum (strain DJO10A).